The sequence spans 506 residues: MVSIRPDEISAILKKQIEDYDKSVSVSNVGTVLTVGDGIARVYGLQQAMAGELIEFEDGTEGIALNLEDDNVGAVLMGEGYGIQEGSTVKATGKIAAVPVGEAMLGRVVNSLGRAIDGKGEIATSETRLIESMAPGIIQRKSVHEPMQTGITAIDAMIPVGRGQRELIIGDRQTGKTAIAIDTILNQADQDMICVYVAVGQKAASVANVVEVLRERGALDYTVIVAANASEPAALQYLAPYTGATIAEYFMYKGKATLVIYDDLSKQAAAYRQMSLLLRRPPGREAYPGDVFYCHSRLLERAAKLSDAMGKGSMTALPIIETQAGDVSAYIPTNVISITDGQIFLSSDLFNSGLRPAINVGISVSRVGGAAQTKAIKKIAGTLKLELAQFDELAAFSQFASDLDASTQQQLERGKRLRELLKQPQFSPLILAEQVAIVYAGVKGLIDDVPVDKVVDFSRELREYLKSNKAEFITEIQEKKVMSPEAEAILKDAITEVVSTMVASAA.

Residue glycine 170–threonine 177 participates in ATP binding.

The protein belongs to the ATPase alpha/beta chains family. In terms of assembly, F-type ATPases have 2 components, CF(1) - the catalytic core - and CF(0) - the membrane proton channel. CF(1) has five subunits: alpha(3), beta(3), gamma(1), delta(1), epsilon(1). CF(0) has four main subunits: a(1), b(1), b'(1) and c(9-12).

The protein resides in the cellular thylakoid membrane. It carries out the reaction ATP + H2O + 4 H(+)(in) = ADP + phosphate + 5 H(+)(out). Functionally, produces ATP from ADP in the presence of a proton gradient across the membrane. The alpha chain is a regulatory subunit. The protein is ATP synthase subunit alpha of Synechococcus sp. (strain CC9605).